A 142-amino-acid chain; its full sequence is Small ribosomal subunit protein uS11c (142 aa).

Belongs to the universal ribosomal protein uS11 family. Part of the 30S ribosomal subunit.

It is found in the plastid. Its subcellular location is the chloroplast. This is Small ribosomal subunit protein uS11c from Welwitschia mirabilis (Tree tumbo).